The sequence spans 117 residues: MSAAPTTAPVAAVSKKGKKSGDTINSKLALTMKSGKYVLGYKSTLKTLRSGKAKLILIAANAPPLRKSELEYYAMLSRCSVHHYSGNNIDLGTACGKLFRVGVLAVIDAGDSDILAA.

Residues 1 to 14 (MSAAPTTAPVAAVS) show a composition bias toward low complexity. The interval 1-22 (MSAAPTTAPVAAVSKKGKKSGD) is disordered.

It belongs to the eukaryotic ribosomal protein eL30 family. Component of the large ribosomal subunit (LSU). Mature yeast ribosomes consist of a small (40S) and a large (60S) subunit. The 40S small subunit contains 1 molecule of ribosomal RNA (18S rRNA) and at least 33 different proteins. The large 60S subunit contains 3 rRNA molecules (25S, 5.8S and 5S rRNA) and at least 46 different proteins.

Its subcellular location is the cytoplasm. In terms of biological role, component of the ribosome, a large ribonucleoprotein complex responsible for the synthesis of proteins in the cell. The small ribosomal subunit (SSU) binds messenger RNAs (mRNAs) and translates the encoded message by selecting cognate aminoacyl-transfer RNA (tRNA) molecules. The large subunit (LSU) contains the ribosomal catalytic site termed the peptidyl transferase center (PTC), which catalyzes the formation of peptide bonds, thereby polymerizing the amino acids delivered by tRNAs into a polypeptide chain. The nascent polypeptides leave the ribosome through a tunnel in the LSU and interact with protein factors that function in enzymatic processing, targeting, and the membrane insertion of nascent chains at the exit of the ribosomal tunnel. In Schizosaccharomyces pombe (strain 972 / ATCC 24843) (Fission yeast), this protein is Large ribosomal subunit protein eL30B (rpl3002).